The following is a 313-amino-acid chain: 2-oxoglutarate-dependent dioxygenase eupC (313 aa).

The Fe2OG dioxygenase domain maps to Pro187 to Gly284. Positions 212, 214, and 263 each coordinate Fe cation. Lys274 is a 2-oxoglutarate binding site.

It belongs to the iron/ascorbate-dependent oxidoreductase family. Requires Fe(2+) as cofactor.

It functions in the pathway secondary metabolite biosynthesis; terpenoid biosynthesis. Functionally, 2-oxoglutarate-dependent dioxygenase; part of the gene cluster that mediates the biosynthesis of eupenifeldin, a bistropolone meroterpenoid that acts as an antitumor agent. The first step of eupenifeldin biosynthesis is the biosynthesis of 3-methylorcinaldehyde performed by the non-reducing polyketide synthase eupA. Oxidative dearomatization of 3-methylorcinaldehyde likely catalyzed by the FAD-dependent monooxygenase eupB is followed by oxidative ring expansion by the 2-oxoglutarate-dependent dioxygenase eupC to provide the first tropolone metabolite, tropolone stipitaldehyde. In parallel, generation of sesquiterpene alpha-humulene from farnesylpyrophosphate (FPP) is catalyzed by the terpene cyclase eupE. The cytochrome P450 monooxygenase eupD then hydroxylates humulene to humulenol. The putative Diels-Alderase eupF probably catalyzes the formation of the tropolone-humulene skeleton by linking humulenol and the polyketide moiety. The short-chain dehydrogenase/reductase eupG and the flavin-dependent monooxygenase eupH are also essential for eupenifeldin biosynthesis and are likely the additional decorating enzymes of the tropolone-humulene skeleton to produce final eupenifeldin or derivatives. This Phoma sp protein is 2-oxoglutarate-dependent dioxygenase eupC.